A 220-amino-acid chain; its full sequence is Small ribosomal subunit protein uS3c (220 aa).

Residues 48 to 119 (VQKHTNNPFH…KLCLILIKID (72 aa)) form the KH type-2 domain.

Belongs to the universal ribosomal protein uS3 family. Part of the 30S ribosomal subunit.

The protein resides in the plastid. Its subcellular location is the chloroplast. The chain is Small ribosomal subunit protein uS3c (rps3) from Psilotum nudum (Whisk fern).